We begin with the raw amino-acid sequence, 373 residues long: Chaperone protein DnaJ (373 aa).

The J domain occupies 4–69; it reads SYYEILEITQ…EKRAIYDRYG (66 aa). A CR-type zinc finger spans residues 135-212; it reads GCKKNIDFTY…CKGLGYNESK (78 aa). 8 residues coordinate Zn(2+): cysteine 148, cysteine 151, cysteine 164, cysteine 167, cysteine 186, cysteine 189, cysteine 200, and cysteine 203. CXXCXGXG motif repeat units lie at residues 148–155, 164–171, 186–193, and 200–207; these read CKTCNGTG, CPKCQGRG, CPDCQGIG, and CSDCKGLG.

This sequence belongs to the DnaJ family. As to quaternary structure, homodimer. Zn(2+) is required as a cofactor.

It is found in the cytoplasm. In terms of biological role, participates actively in the response to hyperosmotic and heat shock by preventing the aggregation of stress-denatured proteins and by disaggregating proteins, also in an autonomous, DnaK-independent fashion. Unfolded proteins bind initially to DnaJ; upon interaction with the DnaJ-bound protein, DnaK hydrolyzes its bound ATP, resulting in the formation of a stable complex. GrpE releases ADP from DnaK; ATP binding to DnaK triggers the release of the substrate protein, thus completing the reaction cycle. Several rounds of ATP-dependent interactions between DnaJ, DnaK and GrpE are required for fully efficient folding. Also involved, together with DnaK and GrpE, in the DNA replication of plasmids through activation of initiation proteins. In Campylobacter jejuni subsp. jejuni serotype O:2 (strain ATCC 700819 / NCTC 11168), this protein is Chaperone protein DnaJ.